A 56-amino-acid chain; its full sequence is U-megalopygitoxin(2)-Mo9 (56 aa).

Positions 1 to 25 (MKFIVLLLIVTSVLMMFAVTTEASP) are cleaved as a signal peptide. Gln-26 bears the Pyrrolidone carboxylic acid mark. The residue at position 55 (Thr-55) is a Threonine amide.

This sequence belongs to the caterpillar 2 family. Contains 2 disulfide bonds. In terms of tissue distribution, expressed by the venom apparatus.

It is found in the secreted. In terms of biological role, probable toxin. This chain is U-megalopygitoxin(2)-Mo9, found in Megalopyge opercularis (Southern flannel moth).